Here is a 331-residue protein sequence, read N- to C-terminus: Pantothenate kinase (331 aa).

Residue G109 to S116 coordinates ATP.

It belongs to the prokaryotic pantothenate kinase family.

Its subcellular location is the cytoplasm. The catalysed reaction is (R)-pantothenate + ATP = (R)-4'-phosphopantothenate + ADP + H(+). It participates in cofactor biosynthesis; coenzyme A biosynthesis; CoA from (R)-pantothenate: step 1/5. The polypeptide is Pantothenate kinase (Rhizobium rhizogenes (strain K84 / ATCC BAA-868) (Agrobacterium radiobacter)).